The sequence spans 157 residues: GTP-dependent dephospho-CoA kinase (157 aa).

GTP is bound by residues Asp-40, Asp-59, Lys-61, Glu-107, and Asp-128.

The protein belongs to the GTP-dependent DPCK family.

The catalysed reaction is 3'-dephospho-CoA + GTP = GDP + CoA + H(+). The protein operates within cofactor biosynthesis; coenzyme A biosynthesis. Its function is as follows. Catalyzes the GTP-dependent phosphorylation of the 3'-hydroxyl group of dephosphocoenzyme A to form coenzyme A (CoA). The chain is GTP-dependent dephospho-CoA kinase from Desulfurococcus amylolyticus (strain DSM 18924 / JCM 16383 / VKM B-2413 / 1221n) (Desulfurococcus kamchatkensis).